The chain runs to 520 residues: Keratin, type II cytoskeletal 72 (520 aa).

The interval 1–133 (MSRQLTLYPG…DPEIQKVRAQ (133 aa)) is head. The coil 1A stretch occupies residues 134-169 (EREQIKALNNKFASFIDKVRFLEQQNQVLETKWELL). Residues 134–447 (EREQIKALNN…KLLESEESRM (314 aa)) enclose the IF rod domain. The interval 170-188 (QQLDQNNSRRSLEPVHESY) is linker 1. The coil 1B stretch occupies residues 189-280 (ISNLQKQLEI…VLFEGEIAQM (92 aa)). A linker 12 region spans residues 281–304 (QSHISDTSVILSMDNNRQLDLDSI). The segment at 305–443 (LAEVRAQYEE…ATYRKLLESE (139 aa)) is coil 2. Positions 444 to 520 (ESRMAGEYPS…SSCVSKKASR (77 aa)) are tail. The interval 495–520 (GSCGSELKDPPAKTSASSCVSKKASR) is disordered.

It belongs to the intermediate filament family. In terms of assembly, heterotetramer of two type I and two type II keratins.

Functionally, has a role in hair formation. Specific component of keratin intermediate filaments in the inner root sheath (IRS) of the hair follicle. The protein is Keratin, type II cytoskeletal 72 (Krt72) of Rattus norvegicus (Rat).